A 400-amino-acid polypeptide reads, in one-letter code: Elongation factor Tu (400 aa).

The region spanning 10-209 (KPHVNVGTIG…AVDSYIPTPE (200 aa)) is the tr-type G domain. Residues 19–26 (GHVDHGKT) form a G1 region. 19-26 (GHVDHGKT) provides a ligand contact to GTP. Thr26 contacts Mg(2+). Positions 60–64 (GITIS) are G2. Residues 81-84 (DCPG) are G3. GTP contacts are provided by residues 81 to 85 (DCPGH) and 136 to 139 (NKAD). The segment at 136-139 (NKAD) is G4. A G5 region spans residues 174-176 (SGL).

The protein belongs to the TRAFAC class translation factor GTPase superfamily. Classic translation factor GTPase family. EF-Tu/EF-1A subfamily. In terms of assembly, monomer.

It localises to the cytoplasm. It catalyses the reaction GTP + H2O = GDP + phosphate + H(+). In terms of biological role, GTP hydrolase that promotes the GTP-dependent binding of aminoacyl-tRNA to the A-site of ribosomes during protein biosynthesis. In Desulfitobacterium hafniense (strain DSM 10664 / DCB-2), this protein is Elongation factor Tu.